Here is a 92-residue protein sequence, read N- to C-terminus: UPF0223 protein SSP1692 (92 aa).

This sequence belongs to the UPF0223 family.

The polypeptide is UPF0223 protein SSP1692 (Staphylococcus saprophyticus subsp. saprophyticus (strain ATCC 15305 / DSM 20229 / NCIMB 8711 / NCTC 7292 / S-41)).